We begin with the raw amino-acid sequence, 259 residues long: Thiazole synthase (259 aa).

The active-site Schiff-base intermediate with DXP is the lysine 98. Residues glycine 159, 185-186 (AG), and 207-208 (NS) contribute to the 1-deoxy-D-xylulose 5-phosphate site.

The protein belongs to the ThiG family. As to quaternary structure, homotetramer. Forms heterodimers with either ThiH or ThiS.

It is found in the cytoplasm. It catalyses the reaction [ThiS sulfur-carrier protein]-C-terminal-Gly-aminoethanethioate + 2-iminoacetate + 1-deoxy-D-xylulose 5-phosphate = [ThiS sulfur-carrier protein]-C-terminal Gly-Gly + 2-[(2R,5Z)-2-carboxy-4-methylthiazol-5(2H)-ylidene]ethyl phosphate + 2 H2O + H(+). It participates in cofactor biosynthesis; thiamine diphosphate biosynthesis. In terms of biological role, catalyzes the rearrangement of 1-deoxy-D-xylulose 5-phosphate (DXP) to produce the thiazole phosphate moiety of thiamine. Sulfur is provided by the thiocarboxylate moiety of the carrier protein ThiS. In vitro, sulfur can be provided by H(2)S. This is Thiazole synthase from Chlorobium phaeovibrioides (strain DSM 265 / 1930) (Prosthecochloris vibrioformis (strain DSM 265)).